An 86-amino-acid chain; its full sequence is Small ribosomal subunit protein bS20 (86 aa).

The disordered stretch occupies residues 1–25; it reads MANIKSQQKRNRTNERARLRNKAVK.

Belongs to the bacterial ribosomal protein bS20 family.

Functionally, binds directly to 16S ribosomal RNA. This chain is Small ribosomal subunit protein bS20, found in Mycobacterium bovis (strain ATCC BAA-935 / AF2122/97).